Here is an 880-residue protein sequence, read N- to C-terminus: Alanine--tRNA ligase (880 aa).

Zn(2+) contacts are provided by His563, His567, Cys673, and His677.

The protein belongs to the class-II aminoacyl-tRNA synthetase family. Requires Zn(2+) as cofactor.

It localises to the cytoplasm. The catalysed reaction is tRNA(Ala) + L-alanine + ATP = L-alanyl-tRNA(Ala) + AMP + diphosphate. In terms of biological role, catalyzes the attachment of alanine to tRNA(Ala) in a two-step reaction: alanine is first activated by ATP to form Ala-AMP and then transferred to the acceptor end of tRNA(Ala). Also edits incorrectly charged Ser-tRNA(Ala) and Gly-tRNA(Ala) via its editing domain. The polypeptide is Alanine--tRNA ligase (Caulobacter vibrioides (strain ATCC 19089 / CIP 103742 / CB 15) (Caulobacter crescentus)).